We begin with the raw amino-acid sequence, 868 residues long: LPS-assembly protein LptD (868 aa).

A signal peptide spans 1-24; sequence MLKGIHKYLLMCFGTVLFTVQANA.

It belongs to the LptD family. As to quaternary structure, component of the lipopolysaccharide transport and assembly complex. Interacts with LptE and LptA.

It is found in the cell outer membrane. Together with LptE, is involved in the assembly of lipopolysaccharide (LPS) at the surface of the outer membrane. This Francisella tularensis subsp. novicida (strain U112) protein is LPS-assembly protein LptD.